Reading from the N-terminus, the 72-residue chain is Sec-independent protein translocase protein TatA (72 aa).

The helical transmembrane segment at 1–21 (MAGLSIWHVVIFAIVVILLFG) threads the bilayer. A disordered region spans residues 47–72 (DEAASLNSPRTIDAQVKTSESTSVKS). A compositionally biased stretch (polar residues) spans 51-72 (SLNSPRTIDAQVKTSESTSVKS).

Belongs to the TatA/E family. In terms of assembly, the Tat system comprises two distinct complexes: a TatABC complex, containing multiple copies of TatA, TatB and TatC subunits, and a separate TatA complex, containing only TatA subunits. Substrates initially bind to the TatABC complex, which probably triggers association of the separate TatA complex to form the active translocon.

The protein localises to the cell inner membrane. Part of the twin-arginine translocation (Tat) system that transports large folded proteins containing a characteristic twin-arginine motif in their signal peptide across membranes. TatA could form the protein-conducting channel of the Tat system. This is Sec-independent protein translocase protein TatA from Acinetobacter baumannii (strain AB307-0294).